The sequence spans 635 residues: Peptidyl-prolyl cis-trans isomerase PASTICCINO1 (635 aa).

Over residues M1–N10 the composition is skewed to polar residues. Positions M1–K28 are disordered. PPIase FKBP-type domains are found at residues G51–S147, P175–I260, and D291–E383. TPR repeat units lie at residues A400–V433, N449–H482, and V483–S516. The segment at K530 to F546 is calmodulin-binding. Residues E569–G586 show a composition bias toward acidic residues. The interval E569–E593 is disordered. The helical; Anchor for type IV membrane protein transmembrane segment at V609–F629 threads the bilayer.

This sequence belongs to the FKBP-type PPIase family. In terms of assembly, interacts with calmodulin (CaM). Interacts with RPM1 and NAC089. Interacts with the elongase complex core members KCR1, PAS2 and CER10. Expressed ubiquitously.

It localises to the endoplasmic reticulum membrane. The protein localises to the cytoplasm. The protein resides in the nucleus. The catalysed reaction is [protein]-peptidylproline (omega=180) = [protein]-peptidylproline (omega=0). Its function is as follows. PPIases accelerate the folding of proteins. It catalyzes the cis-trans isomerization of proline imidic peptide bonds in oligopeptides. Essential protein regulating cell division, adhesion and elongation throughout the plant development and embryogenesis. Required for the spatial organization of apical meristems. Involved in the hormonal control of cell division and differentiation mediated by cytokinins and auxin. Regulates the function of NAC089 transcription factor by controlling its targeting to the nucleus upon plant cell division. Interacts with enzymes of the fatty acid elongase complex and favors the generation of very-long-chain fatty acids (VLCFAs) required for polar auxin transport and tissue patterning during plant development. The sequence is that of Peptidyl-prolyl cis-trans isomerase PASTICCINO1 (PAS1) from Arabidopsis thaliana (Mouse-ear cress).